An 85-amino-acid chain; its full sequence is Alpha-insect toxin BjaIT (85 aa).

A signal peptide spans 1–19 (MNYLVVICFALLLMTGVES). Residues 21–83 (RDAYIADNLN…VPIRIPGACR (63 aa)) enclose the LCN-type CS-alpha/beta domain. Cystine bridges form between Cys-31-Cys-82, Cys-35-Cys-55, Cys-41-Cys-65, and Cys-45-Cys-67. Arginine amide is present on Arg-83.

The protein belongs to the long (4 C-C) scorpion toxin superfamily. Sodium channel inhibitor family. Alpha subfamily. Expressed by the venom gland.

The protein resides in the secreted. In terms of biological role, alpha toxins bind voltage-independently at site-3 of sodium channels (Nav) and inhibit the inactivation of the activated channels, thereby blocking neuronal transmission. This toxin is active against insects (para/tipE). This is Alpha-insect toxin BjaIT from Hottentotta judaicus (Black scorpion).